A 430-amino-acid polypeptide reads, in one-letter code: Adenylosuccinate synthetase (430 aa).

GTP is bound by residues 12-18 (GDEGKGK) and 40-42 (GHT). The Proton acceptor role is filled by D13. 2 residues coordinate Mg(2+): D13 and G40. Residues 13–16 (DEGK), 38–41 (NAGH), T128, R142, Q223, T238, and R302 each bind IMP. The active-site Proton donor is the H41. Substrate is bound at residue 298 to 304 (TTTGRPR). Residues R304, 330–332 (LLD), and 412–414 (SVG) each bind GTP.

The protein belongs to the adenylosuccinate synthetase family. Homodimer. Requires Mg(2+) as cofactor.

The protein resides in the cytoplasm. It carries out the reaction IMP + L-aspartate + GTP = N(6)-(1,2-dicarboxyethyl)-AMP + GDP + phosphate + 2 H(+). It functions in the pathway purine metabolism; AMP biosynthesis via de novo pathway; AMP from IMP: step 1/2. Functionally, plays an important role in the de novo pathway of purine nucleotide biosynthesis. Catalyzes the first committed step in the biosynthesis of AMP from IMP. The polypeptide is Adenylosuccinate synthetase (Listeria innocua serovar 6a (strain ATCC BAA-680 / CLIP 11262)).